Reading from the N-terminus, the 80-residue chain is Trefoil factor 3 (80 aa).

An N-terminal signal peptide occupies residues 1–21 (MEARVLWLLALVLALGSSSLA). The P-type domain occupies 30–73 (NLCAVPAKNRVDCGYPEISPEQCVNRGCCFDSSIPEVPWCFKPL). 3 disulfide bridges follow: C32-C58, C42-C57, and C52-C69.

Monomer. Homodimer; disulfide-linked.

Its subcellular location is the secreted. The protein localises to the extracellular space. The protein resides in the extracellular matrix. It localises to the cytoplasm. Its function is as follows. Involved in the maintenance and repair of the intestinal mucosa. Promotes the mobility of epithelial cells in healing processes (motogen). In Felis catus (Cat), this protein is Trefoil factor 3 (TFF3).